The chain runs to 344 residues: Envelope glycoprotein M (344 aa).

The Intravirion portion of the chain corresponds to 1–12 (MASSRVDTINLR). Residues 13 to 33 (IWLVSIICAALSFINVTVYLI) traverse the membrane as a helical segment. Residues 34 to 76 (AINFPNLGFPCAYFEINDLKAVNLSANNQIYQMTHQLYINPVQ) are Virion surface-facing. Residues 77-97 (IICYVLIMAMLFLLIIIYYIV) form a helical membrane-spanning segment. Topologically, residues 98-125 (CCAKVFSSNKTSNVNQTTRDITWMGDTS) are intravirion. The helical transmembrane segment at 126-146 (SCFQFILIMDTFQLFVTALSF) threads the bilayer. Residue arginine 147 is a topological domain, virion surface. The chain crosses the membrane as a helical span at residues 148 to 168 (LVALGAFAYCIFFVCFTTFNV). The Intravirion portion of the chain corresponds to 169-203 (TLITQFQSADKSFFAFQKIHPNLKGTVQFKTVVIN). The helical transmembrane segment at 204–224 (LTELMLGYSTMFLGITTCLGV) threads the bilayer. The Virion surface portion of the chain corresponds to 225 to 238 (GNSIYIRSITVAYS). Residues 239-259 (SINTFLVMACIYSIVIEAVLV) form a helical membrane-spanning segment. Residues 260 to 263 (RYVK) are Intravirion-facing. A helical membrane pass occupies residues 264–284 (PLFGYYVGMFCGAVGLSFPIL). Over 285–293 (QYETFFESE) the chain is Virion surface. Residues 294 to 314 (WSTGLIINLAVIAIISIGFII) form a helical membrane-spanning segment. Residues 315–344 (CRLVRYLVKKKRRYKQLVNTESSSLMDENE) are Intravirion-facing.

Belongs to the herpesviridae glycoprotein M family. Interacts (via N-terminus) with gN (via N-terminus). The gM-gN heterodimer forms the gCII complex.

It localises to the virion membrane. Its subcellular location is the host Golgi apparatus. The protein localises to the host trans-Golgi network. The protein resides in the host endosome membrane. It is found in the host nucleus inner membrane. Functionally, envelope glycoprotein important for virion assembly and egress. Plays a role in the correct incorporation of gH-gL into virion membrane. Directs the glycoprotein N (gN) to the host trans-Golgi network. The sequence is that of Envelope glycoprotein M from Homo sapiens (Human).